The chain runs to 122 residues: Biogenesis of lysosome-related organelles complex 1 subunit CNL1 (122 aa).

Residues 1 to 10 (MQDNSSHSRE) show a composition bias toward basic and acidic residues. The segment at 1-21 (MQDNSSHSRESASAGDDPLGI) is disordered. Residues 63–95 (ENTIDKNIAKFKELLEKCDTLENHYEMLNQLAI) adopt a coiled-coil conformation.

Belongs to the BLOC1S4 family. In terms of assembly, component of the biogenesis of lysosome-related organelles complex-1 (BLOC-1) composed of at least BLI1, BLS1, CNL1, KXD1, SNN1 and VAB2.

The protein localises to the cytoplasm. Functionally, component of the biogenesis of lysosome-related organelles complex-1 (BLOC-1), a complex that is involved in endosomal cargo sorting. This chain is Biogenesis of lysosome-related organelles complex 1 subunit CNL1 (CLN1), found in Saccharomyces cerevisiae (strain RM11-1a) (Baker's yeast).